We begin with the raw amino-acid sequence, 106 residues long: RNA-binding protein Hfq (106 aa).

The region spanning 9-68 (DPYLNALRKERVPVSIYLVNGIKLQGQIESFDAFVILLRNNISQMVYKHAVSTIVPSRNI) is the Sm domain. A disordered region spans residues 78-106 (EDEAGEEISAEYTPNAEGQAEATADPLYD).

This sequence belongs to the Hfq family. As to quaternary structure, homohexamer.

Functionally, RNA chaperone that binds small regulatory RNA (sRNAs) and mRNAs to facilitate mRNA translational regulation in response to envelope stress, environmental stress and changes in metabolite concentrations. Also binds with high specificity to tRNAs. The polypeptide is RNA-binding protein Hfq (Dichelobacter nodosus (strain VCS1703A)).